A 352-amino-acid chain; its full sequence is Anthranilate phosphoribosyltransferase (352 aa).

5-phospho-alpha-D-ribose 1-diphosphate is bound by residues Gly94, 97 to 98 (GS), Ser102, 104 to 107 (NIST), 122 to 130 (KHGNRAVSS), and Ser134. Gly94 provides a ligand contact to anthranilate. Ser106 serves as a coordination point for Mg(2+). Residue Asn125 coordinates anthranilate. Arg180 lines the anthranilate pocket. Residues Asp239 and Glu240 each coordinate Mg(2+).

The protein belongs to the anthranilate phosphoribosyltransferase family. As to quaternary structure, homodimer. Mg(2+) serves as cofactor.

It catalyses the reaction N-(5-phospho-beta-D-ribosyl)anthranilate + diphosphate = 5-phospho-alpha-D-ribose 1-diphosphate + anthranilate. Its pathway is amino-acid biosynthesis; L-tryptophan biosynthesis; L-tryptophan from chorismate: step 2/5. Functionally, catalyzes the transfer of the phosphoribosyl group of 5-phosphorylribose-1-pyrophosphate (PRPP) to anthranilate to yield N-(5'-phosphoribosyl)-anthranilate (PRA). This chain is Anthranilate phosphoribosyltransferase, found in Citrifermentans bemidjiense (strain ATCC BAA-1014 / DSM 16622 / JCM 12645 / Bem) (Geobacter bemidjiensis).